We begin with the raw amino-acid sequence, 577 residues long: DNA-directed RNA polymerase subunit alpha (577 aa).

An alpha N-terminal domain (alpha-NTD) region spans residues 1–461 (MIKIIIKETF…QLFLPLQQIR (461 aa)). Positions 510-577 (FDHRLLELDI…ALQLMKLTLK (68 aa)) are alpha C-terminal domain (alpha-CTD).

Belongs to the RNA polymerase alpha chain family. In plastids the minimal PEP RNA polymerase catalytic core is composed of four subunits: alpha, beta, beta', and beta''. When a (nuclear-encoded) sigma factor is associated with the core the holoenzyme is formed, which can initiate transcription.

The protein resides in the plastid. It is found in the chloroplast. The enzyme catalyses RNA(n) + a ribonucleoside 5'-triphosphate = RNA(n+1) + diphosphate. In terms of biological role, DNA-dependent RNA polymerase catalyzes the transcription of DNA into RNA using the four ribonucleoside triphosphates as substrates. In Tupiella akineta (Green alga), this protein is DNA-directed RNA polymerase subunit alpha.